We begin with the raw amino-acid sequence, 398 residues long: Bifunctional enzyme IspD/IspF (398 aa).

The segment at 1–234 (MANSRRTAAI…SRLAALLGDI (234 aa)) is 2-C-methyl-D-erythritol 4-phosphate cytidylyltransferase. A 2-C-methyl-D-erythritol 2,4-cyclodiphosphate synthase region spans residues 235–398 (RTGTGYDVHA…LPWGPNGLSG (164 aa)). Asp-241 and His-243 together coordinate a divalent metal cation. 4-CDP-2-C-methyl-D-erythritol 2-phosphate-binding positions include 241–243 (DVH) and 267–268 (HS). An a divalent metal cation-binding site is contributed by His-275. 4-CDP-2-C-methyl-D-erythritol 2-phosphate is bound by residues 289–291 (DIG), 365–368 (TTSE), Phe-372, and Arg-375.

It in the N-terminal section; belongs to the IspD/TarI cytidylyltransferase family. IspD subfamily. The protein in the C-terminal section; belongs to the IspF family. A divalent metal cation serves as cofactor.

The catalysed reaction is 2-C-methyl-D-erythritol 4-phosphate + CTP + H(+) = 4-CDP-2-C-methyl-D-erythritol + diphosphate. The enzyme catalyses 4-CDP-2-C-methyl-D-erythritol 2-phosphate = 2-C-methyl-D-erythritol 2,4-cyclic diphosphate + CMP. Its pathway is isoprenoid biosynthesis; isopentenyl diphosphate biosynthesis via DXP pathway; isopentenyl diphosphate from 1-deoxy-D-xylulose 5-phosphate: step 2/6. It participates in isoprenoid biosynthesis; isopentenyl diphosphate biosynthesis via DXP pathway; isopentenyl diphosphate from 1-deoxy-D-xylulose 5-phosphate: step 4/6. Its function is as follows. Bifunctional enzyme that catalyzes the formation of 4-diphosphocytidyl-2-C-methyl-D-erythritol from CTP and 2-C-methyl-D-erythritol 4-phosphate (MEP) (IspD), and catalyzes the conversion of 4-diphosphocytidyl-2-C-methyl-D-erythritol 2-phosphate (CDP-ME2P) to 2-C-methyl-D-erythritol 2,4-cyclodiphosphate (ME-CPP) with a corresponding release of cytidine 5-monophosphate (CMP) (IspF). The protein is Bifunctional enzyme IspD/IspF of Rhodopseudomonas palustris (strain BisA53).